A 212-amino-acid polypeptide reads, in one-letter code: Urease accessory protein UreG (212 aa).

15-22 (GPVGSGKT) lines the GTP pocket.

It belongs to the SIMIBI class G3E GTPase family. UreG subfamily. Homodimer. UreD, UreF and UreG form a complex that acts as a GTP-hydrolysis-dependent molecular chaperone, activating the urease apoprotein by helping to assemble the nickel containing metallocenter of UreC. The UreE protein probably delivers the nickel.

It is found in the cytoplasm. In terms of biological role, facilitates the functional incorporation of the urease nickel metallocenter. This process requires GTP hydrolysis, probably effectuated by UreG. The polypeptide is Urease accessory protein UreG (Opitutus terrae (strain DSM 11246 / JCM 15787 / PB90-1)).